We begin with the raw amino-acid sequence, 706 residues long: 1,4-alpha-glucan-branching enzyme (706 aa).

(1,4-alpha-D-glucosyl)n is bound by residues W96 and K133. D358 acts as the Nucleophile in catalysis. The Proton donor role is filled by E419.

It belongs to the glycosyl hydrolase 13 family. GlgB subfamily. In terms of assembly, monomer.

It is found in the cytoplasm. The catalysed reaction is Transfers a segment of a (1-&gt;4)-alpha-D-glucan chain to a primary hydroxy group in a similar glucan chain.. Its pathway is glycan biosynthesis; glycogen biosynthesis. Glycogen-branching enzyme participates in the glycogen biosynthetic process along with glycogenin and glycogen synthase. Generates alpha-1,6-glucosidic branches from alpha-1,4-linked glucose chains, to increase solubility of the glycogen polymer. In Candida glabrata (strain ATCC 2001 / BCRC 20586 / JCM 3761 / NBRC 0622 / NRRL Y-65 / CBS 138) (Yeast), this protein is 1,4-alpha-glucan-branching enzyme (GLC3).